The primary structure comprises 80 residues: uncharacterized protein (80 aa).

The next 2 membrane-spanning stretches (helical) occupy residues 15–35 and 45–65; these read ALGL…LSGV and WFEM…WAMV.

The protein to H.influenzae HI_0974B.

The protein localises to the cell membrane. This is an uncharacterized protein from Escherichia coli (strain K12).